The sequence spans 409 residues: MKLLYIFEKNIILRKILITFSLIIIFLLGRYVPIPGVLISAYKGQDNNFATLYSTVTGGNLSQVGVFSLGIGPMMTTMILLRLFTIGKYSSGVSQKVQQFRQNVVMLVIAIIQGLAIAISFQYHNGFSLTKLLLATMILVTGAYIISWIGNLNAEYGFGGMTILVVVGMLVGQFNNIPLIFELFQDGYQLAIILFLLWTLVAMYLMITFERSEYRIPVMRTSIHNRLVDDAYMPIKVNASGGMAFMYVYTLLMFPQYIIILLRSIFPTNPDITSYNDYFSLSSIQGVVIYMILMLVLSVAFTFVNIDPTKISEAMRESGDFIPNYRPGKETQSYLSKICYLFGTFSGFFMAFLGGVPLLFALGNDNLRTVSSMTGIFMMITGMSFMILDEFQVIRIRKQYTSVFENEEN.

Helical transmembrane passes span 16–36 (ILIT…PIPG), 61–81 (LSQV…MILL), 104–124 (VVML…FQYH), 132–152 (LLLA…IGNL), 161–181 (MTIL…PLIF), 190–210 (LAII…ITFE), 242–262 (GMAF…IILL), 286–306 (GVVI…FVNI), 341–361 (LFGT…LLFA), and 374–394 (TGIF…FQVI).

The protein belongs to the SecY/SEC61-alpha family. SecY2 subfamily. In terms of assembly, component of the accessory SecA2/SecY2 protein translocase complex required to export cell wall proteins. May form heterotrimers with SecE and SecG subunits.

It localises to the cell membrane. Functionally, part of the accessory SecA2/SecY2 system specifically required for export of possible cell wall proteins. The central subunit of a protein translocation channel. The sequence is that of Accessory Sec system protein translocase subunit SecY2 from Streptococcus agalactiae serotype Ia (strain ATCC 27591 / A909 / CDC SS700).